The primary structure comprises 285 residues: Protease HtpX homolog (285 aa).

The next 2 membrane-spanning stretches (helical) occupy residues T7 to G27 and G30 to D50. Position 131 (H131) interacts with Zn(2+). The active site involves E132. H135 contacts Zn(2+). 2 helical membrane passes run I146–G166 and I177–I197. E202 contacts Zn(2+).

The protein belongs to the peptidase M48B family. Zn(2+) is required as a cofactor.

It is found in the cell inner membrane. In Burkholderia cenocepacia (strain ATCC BAA-245 / DSM 16553 / LMG 16656 / NCTC 13227 / J2315 / CF5610) (Burkholderia cepacia (strain J2315)), this protein is Protease HtpX homolog.